The primary structure comprises 335 residues: Heme A synthase (335 aa).

Helical transmembrane passes span 9 to 29, 90 to 110, 120 to 140, 156 to 176, 197 to 217, 255 to 275, 283 to 303, and 309 to 329; these read VAIWLFLCSIMIVLMVGIGGF, YVHRLFARLTGLIFILPFIYF, VVIRLSIALSFGVLQAFTGWY, MLTLHLLLALVIFALLSYQFF, VGIILILIVVQIIFGAFVAGL, VQFIHRTLALLILVLTTVLTI, VYVMLLSVIIQIILGVVTLLL, and IAISHQMFSFILFGSGLCFLC. Position 259 (His259) interacts with heme. Residue His313 coordinates heme.

It belongs to the COX15/CtaA family. Type 2 subfamily. As to quaternary structure, interacts with CtaB. The cofactor is heme b.

The protein resides in the cell membrane. The enzyme catalyses Fe(II)-heme o + 2 A + H2O = Fe(II)-heme a + 2 AH2. It participates in porphyrin-containing compound metabolism; heme A biosynthesis; heme A from heme O: step 1/1. Its function is as follows. Catalyzes the conversion of heme O to heme A by two successive hydroxylations of the methyl group at C8. The first hydroxylation forms heme I, the second hydroxylation results in an unstable dihydroxymethyl group, which spontaneously dehydrates, resulting in the formyl group of heme A. In Wolbachia sp. subsp. Brugia malayi (strain TRS), this protein is Heme A synthase.